Consider the following 410-residue polypeptide: Peptidase T (410 aa).

Position 78 (histidine 78) interacts with Zn(2+). The active site involves aspartate 80. Residue aspartate 140 coordinates Zn(2+). Residue glutamate 174 is the Proton acceptor of the active site. Residues glutamate 175, aspartate 197, and histidine 379 each coordinate Zn(2+).

Belongs to the peptidase M20B family. Requires Zn(2+) as cofactor.

It is found in the cytoplasm. The catalysed reaction is Release of the N-terminal residue from a tripeptide.. Functionally, cleaves the N-terminal amino acid of tripeptides. This chain is Peptidase T, found in Vibrio cholerae serotype O1 (strain ATCC 39315 / El Tor Inaba N16961).